Reading from the N-terminus, the 467-residue chain is Abscisic acid 8'-hydroxylase 1 (467 aa).

A helical transmembrane segment spans residues 5-24; it reads ALFLTLFAGSLFLYFLRCLI. Cys-411 serves as a coordination point for heme.

The protein belongs to the cytochrome P450 family. The cofactor is heme. As to expression, mainly expressed in flowers, siliques, roots and stems. Lower expression in rosette leaves and dry seeds. Expressed in vascular tissues of embryo during the seed development.

The protein localises to the membrane. It catalyses the reaction 2-cis-(+)-abscisate + reduced [NADPH--hemoprotein reductase] + O2 = (+)-8'-hydroxyabscisate + oxidized [NADPH--hemoprotein reductase] + H2O + H(+). The protein operates within plant hormone degradation; abscisic acid degradation. Its function is as follows. Involved in the oxidative degradation of abscisic acid. Plays an important role in determining abscisic acid levels in dry seeds and in the control of postgermination growth. The chain is Abscisic acid 8'-hydroxylase 1 (CYP707A1) from Arabidopsis thaliana (Mouse-ear cress).